Here is a 119-residue protein sequence, read N- to C-terminus: Large ribosomal subunit protein uL18 (119 aa).

It belongs to the universal ribosomal protein uL18 family. Part of the 50S ribosomal subunit; part of the 5S rRNA/L5/L18/L25 subcomplex. Contacts the 5S and 23S rRNAs.

Functionally, this is one of the proteins that bind and probably mediate the attachment of the 5S RNA into the large ribosomal subunit, where it forms part of the central protuberance. This chain is Large ribosomal subunit protein uL18, found in Tropheryma whipplei (strain TW08/27) (Whipple's bacillus).